Consider the following 810-residue polypeptide: Soluble starch synthase 2-3, chloroplastic/amyloplastic (810 aa).

The N-terminal 16 residues, 1–16, are a transit peptide targeting the chloroplast; it reads MSSAVVASSTTFLVAL. Disordered regions lie at residues 43–265 and 281–313; these read GRAG…PIPA and EPDA…SGPL. Basic and acidic residues predominate over residues 63–83; the sequence is RDAGVVRRADDGENEAAVERA. Acidic residues predominate over residues 84-93; sequence GEDDEEEEEF. The segment covering 102–116 has biased composition (basic residues); sequence RSRRGGVGKVLKRRG. Residues 129-148 are compositionally biased toward low complexity; it reads DAARVRGAAAPAPAPTQDAA. Residues 281 to 310 are compositionally biased toward acidic residues; sequence EPDAAEDGDDDDDWADSDASDSEIDQDDDS. Lysine 333 lines the ADP-alpha-D-glucose pocket.

This sequence belongs to the glycosyltransferase 1 family. Bacterial/plant glycogen synthase subfamily. In terms of tissue distribution, expressed most exclusively in endosperm.

The protein localises to the plastid. The protein resides in the amyloplast. Its subcellular location is the chloroplast. The enzyme catalyses [(1-&gt;4)-alpha-D-glucosyl](n) + ADP-alpha-D-glucose = [(1-&gt;4)-alpha-D-glucosyl](n+1) + ADP + H(+). It functions in the pathway glycan biosynthesis; starch biosynthesis. In terms of biological role, plays an important role during endosperm starch synthesis. Determines the type of amylopectin structure of starch grain. Synthesizes long B1 amylopectin chains by elongating short A and B1 chains, independently of the other soluble starch synthases. Barely active in japonica subspecies. The polypeptide is Soluble starch synthase 2-3, chloroplastic/amyloplastic (SSII-3) (Oryza sativa subsp. indica (Rice)).